A 621-amino-acid chain; its full sequence is Protein CASP (621 aa).

Topologically, residues 1–574 are cytoplasmic; that stretch reads MEIVSRAWES…ILATPKSRTV (574 aa). 2 coiled-coil regions span residues 101-445 and 473-525; these read LLKG…VQDI and ILTS…FLQS. A helical; Anchor for type IV membrane protein membrane pass occupies residues 575 to 595; the sequence is FFSYLLILHALIMLVLYKFAF. The Lumenal segment spans residues 596–621; it reads DQSVVRDAETECEYKFHQHMLDNHKQ.

The protein belongs to the CASP family.

It is found in the golgi apparatus membrane. May be involved in intra-Golgi retrograde transport. This Caenorhabditis elegans protein is Protein CASP (ceh-44).